Here is a 144-residue protein sequence, read N- to C-terminus: Snaclec trimecetin subunit beta (144 aa).

The signal sequence occupies residues 1–23 (MGRFIFVSFGLLVVFLSLSGTAA). 3 disulfides stabilise this stretch: Cys-25/Cys-36, Cys-53/Cys-142, and Cys-119/Cys-134. In terms of domain architecture, C-type lectin spans 32–143 (FRRYCYQVFQ…CSSKRYVVCK (112 aa)).

It belongs to the snaclec family. As to quaternary structure, heterodimer of subunits alpha and beta; disulfide-linked. As to expression, expressed by the venom gland.

Its subcellular location is the secreted. Its function is as follows. Snaclec that induces platelet aggregation in either human platelet rich plasma (PRP) or washed platelet suspensions. It causes aggregation in a dose-dependent manner even in the absence of various platelet agonists such as ADP or von Willebrand factor (vWF). Interestingly, it does not induce aggregation in rabbit PRP. A monoclonal antibody against the platelet GPIb receptor blocks the aggregation induced by trimecetin, suggesting that it acts by binding to GPIb (GP1BA/GP1BB). This is Snaclec trimecetin subunit beta from Protobothrops mucrosquamatus (Taiwan habu).